Consider the following 89-residue polypeptide: Small ribosomal subunit protein uS15 (89 aa).

Belongs to the universal ribosomal protein uS15 family. Part of the 30S ribosomal subunit. Forms a bridge to the 50S subunit in the 70S ribosome, contacting the 23S rRNA.

Functionally, one of the primary rRNA binding proteins, it binds directly to 16S rRNA where it helps nucleate assembly of the platform of the 30S subunit by binding and bridging several RNA helices of the 16S rRNA. Forms an intersubunit bridge (bridge B4) with the 23S rRNA of the 50S subunit in the ribosome. This Mycobacterium avium (strain 104) protein is Small ribosomal subunit protein uS15.